The chain runs to 365 residues: MSRKMAKFYKLDINRTEWEIPETYQNLQPVGQGAYGQVCKAVVRGTSTKVAIKKLARPFQSAVHAKRTYRELRLLKHMDHENVIGLLDVFHPGQPADSLDQFQQVYMVTHLMDADLNNIIRTQKLSDDHVQFLVYQILRGLKYIHSAGVIHRDLKPSNIAVNEDCELRILDFGLARPAESEMTGYVATRWYRAPEIMLNWMHYNQTADIWSVGCIMAELLTGRTLFPGTDHIHQLNLIMEVLGTPADEFMSRISSESARNYIRSLPVMPRRNFRDIFRGANPLAIDLLEKMLELDADKRITAEQALAHPYMEKYHDPTDEQTAALYDQSFEENELPVEKWREMVFSEVTAFKPTAAFAELLPKEQ.

The Protein kinase domain occupies 24 to 311 (YQNLQPVGQG…AEQALAHPYM (288 aa)). ATP contacts are provided by residues 30–38 (VGQGAYGQV) and Lys-53. The active-site Proton acceptor is the Asp-153. Thr-183 is subject to Phosphothreonine. Residues 183–185 (TGY) carry the TXY motif. The residue at position 185 (Tyr-185) is a Phosphotyrosine.

The protein belongs to the protein kinase superfamily. CMGC Ser/Thr protein kinase family. MAP kinase subfamily. It depends on Mg(2+) as a cofactor. Post-translationally, dually phosphorylated on Thr-183 and Tyr-185, which activates the enzyme. In terms of tissue distribution, at mid-embryogenesis, highest expression is seen in developing anterior and posterior midguts. Almost ubiquitous expression throughout all development.

The protein resides in the nucleus. The enzyme catalyses L-seryl-[protein] + ATP = O-phospho-L-seryl-[protein] + ADP + H(+). The catalysed reaction is L-threonyl-[protein] + ATP = O-phospho-L-threonyl-[protein] + ADP + H(+). With respect to regulation, activated by threonine and tyrosine phosphorylation by Mkk3. In terms of biological role, kinase involved in dpp signal transduction pathway in the process of wing morphogenesis when the levels of dpp are enhanced or inhibited. May down-regulate insect immunity gene expression after prolonged infection. The sequence is that of Mitogen-activated protein kinase p38b from Drosophila melanogaster (Fruit fly).